A 219-amino-acid polypeptide reads, in one-letter code: Germin-like protein subfamily 2 member 1 (219 aa).

The signal sequence occupies residues 1–21 (MASPTLTLLLLLTTVSFFISS). A disulfide bridge links C32 with C47. The 149-residue stretch at 61–209 (QGLAKPGLTN…AFQTSPGTVK (149 aa)) folds into the Cupin type-1 domain. N70 is a glycosylation site (N-linked (GlcNAc...) asparagine). Residues H109, H111, E116, and H155 each coordinate Mn(2+).

This sequence belongs to the germin family. In terms of assembly, oligomer (believed to be a pentamer but probably hexamer).

It localises to the secreted. Its subcellular location is the extracellular space. The protein localises to the apoplast. Its function is as follows. May play a role in plant defense. Probably has no oxalate oxidase activity even if the active site is conserved. This chain is Germin-like protein subfamily 2 member 1 (GLP4), found in Arabidopsis thaliana (Mouse-ear cress).